The following is a 310-amino-acid chain: Prostate androgen-regulated mucin-like protein 1 homolog (310 aa).

Positions 1–20 (MVYKTLFALCILTAGWRVQS) are cleaved as a signal peptide. Residues 21–258 (LPTSAPLSVS…EVEHALSSGS (238 aa)) lie on the Extracellular side of the membrane. Polar residues predominate over residues 40-74 (TIWTSSPQNTDADTASPSNGTHNNSVLPVTASAPT). Residues 40-224 (TIWTSSPQNT…VPQEKTPPTT (185 aa)) are disordered. Asn58, Asn62, and Asn80 each carry an N-linked (GlcNAc...) asparagine glycan. Residues 92–103 (SPGSNWEGTNTD) show a composition bias toward polar residues. Residues 150–209 (SPQAPASSPSSLSTSPPEVFSVSVTTNHSSTVTSTQPTGAPTAPESPTEESSSDHTPTSH) show a composition bias toward low complexity. An N-linked (GlcNAc...) asparagine glycan is attached at Asn176. Residues 259–279 (IAAITVTVIAVVLLVFGVAAY) form a helical membrane-spanning segment. Residues 280–310 (LKIRHSSYGRLLDDHDYGSWGNYNNPLYDDS) lie on the Cytoplasmic side of the membrane. Ser298 carries the phosphoserine modification.

It belongs to the PARM family. Highly N-glycosylated and O-glycosylated.

The protein localises to the cell membrane. It is found in the golgi apparatus membrane. The protein resides in the endosome membrane. May regulate TLP1 expression and telomerase activity, thus enabling certain prostatic cells to resist apoptosis. The protein is Prostate androgen-regulated mucin-like protein 1 homolog (PARM1) of Pongo abelii (Sumatran orangutan).